An 84-amino-acid chain; its full sequence is Translation initiation factor IF-1, chloroplastic (84 aa).

Residues 1-72 (MKKQNLVEME…SKGRITYRLR (72 aa)) form the S1-like domain.

The protein belongs to the IF-1 family. Component of the 30S ribosomal translation pre-initiation complex which assembles on the 30S ribosome in the order IF-2 and IF-3, IF-1 and N-formylmethionyl-tRNA(fMet); mRNA recruitment can occur at any time during PIC assembly.

The protein resides in the plastid. It is found in the chloroplast. One of the essential components for the initiation of protein synthesis. Stabilizes the binding of IF-2 and IF-3 on the 30S subunit to which N-formylmethionyl-tRNA(fMet) subsequently binds. Helps modulate mRNA selection, yielding the 30S pre-initiation complex (PIC). Upon addition of the 50S ribosomal subunit IF-1, IF-2 and IF-3 are released leaving the mature 70S translation initiation complex. This is Translation initiation factor IF-1, chloroplastic from Spirogyra maxima (Green alga).